We begin with the raw amino-acid sequence, 236 residues long: Ubiquinone biosynthesis O-methyltransferase (236 aa).

S-adenosyl-L-methionine contacts are provided by Arg39, Gly59, Asp80, and Met124.

It belongs to the methyltransferase superfamily. UbiG/COQ3 family.

It carries out the reaction a 3-demethylubiquinol + S-adenosyl-L-methionine = a ubiquinol + S-adenosyl-L-homocysteine + H(+). The enzyme catalyses a 3-(all-trans-polyprenyl)benzene-1,2-diol + S-adenosyl-L-methionine = a 2-methoxy-6-(all-trans-polyprenyl)phenol + S-adenosyl-L-homocysteine + H(+). It functions in the pathway cofactor biosynthesis; ubiquinone biosynthesis. Its function is as follows. O-methyltransferase that catalyzes the 2 O-methylation steps in the ubiquinone biosynthetic pathway. The sequence is that of Ubiquinone biosynthesis O-methyltransferase from Shewanella oneidensis (strain ATCC 700550 / JCM 31522 / CIP 106686 / LMG 19005 / NCIMB 14063 / MR-1).